A 652-amino-acid chain; its full sequence is Leucine aminopeptidase 2 (652 aa).

A peptide-binding positions include 165 to 167 and 293 to 298; these read QLE and PYGGME. Zn(2+) is bound at residue His-322. Glu-323 functions as the Proton acceptor in the catalytic mechanism. Zn(2+)-binding residues include His-326 and Glu-345. The active-site Proton donor is Tyr-411.

This sequence belongs to the peptidase M1 family. It depends on Zn(2+) as a cofactor.

The protein resides in the cytoplasm. It is found in the nucleus. The enzyme catalyses an epoxide + H2O = an ethanediol. In terms of biological role, aminopeptidase that preferentially cleaves di- and tripeptides. Also has low epoxide hydrolase activity (in vitro). Can hydrolyze the epoxide leukotriene LTA(4) but it forms preferentially 5,6-dihydroxy-7,9,11,14-eicosatetraenoic acid rather than the cytokine leukotriene B(4) as the product compared to the homologous mammalian enzyme (in vitro). This is Leucine aminopeptidase 2 from Candida glabrata (strain ATCC 2001 / BCRC 20586 / JCM 3761 / NBRC 0622 / NRRL Y-65 / CBS 138) (Yeast).